The sequence spans 169 residues: Large ribosomal subunit protein uL10 (169 aa).

This sequence belongs to the universal ribosomal protein uL10 family. As to quaternary structure, part of the ribosomal stalk of the 50S ribosomal subunit. The N-terminus interacts with L11 and the large rRNA to form the base of the stalk. The C-terminus forms an elongated spine to which L12 dimers bind in a sequential fashion forming a multimeric L10(L12)X complex.

Functionally, forms part of the ribosomal stalk, playing a central role in the interaction of the ribosome with GTP-bound translation factors. The sequence is that of Large ribosomal subunit protein uL10 from Rickettsia akari (strain Hartford).